Here is a 176-residue protein sequence, read N- to C-terminus: Capsid protein (176 aa).

The tract at residues 103–132 (RGEGAQTRNAKRGAAPGTSQVENEEQGQTD) is disordered.

It belongs to the virgaviridae capsid protein family.

The protein resides in the virion. Capsid protein self-assembles to form rod-shaped virions about 20 nm in diameter with a central canal enclosing the viral genomic RNA. Isoform N-CP does not seem to be required for virion formation and systemic infection in host plant. The protein is Capsid protein (CP) of Hordeum vulgare (Barley).